A 477-amino-acid chain; its full sequence is Leukotoxin export protein LtxD (477 aa).

The helical transmembrane segment at 64 to 84 threads the bilayer; sequence IMLFLTLAIIVSIFSNVEIIA. The stretch at 206-287 forms a coiled coil; it reads LNLNKKEAEK…ENEVLLAKEE (82 aa).

This sequence belongs to the membrane fusion protein (MFP) (TC 8.A.1) family. In terms of assembly, probably part of a complex composed of LtxB, LtxD and TdeA, which forms a single transport channel across the two membranes.

The protein resides in the cell inner membrane. In terms of biological role, involved in the export of the LtxA leukotoxin. This is Leukotoxin export protein LtxD from Aggregatibacter actinomycetemcomitans (Actinobacillus actinomycetemcomitans).